A 367-amino-acid polypeptide reads, in one-letter code: Phosphoribosylaminoimidazole-succinocarboxamide synthase (367 aa).

This sequence belongs to the SAICAR synthetase family.

It catalyses the reaction 5-amino-1-(5-phospho-D-ribosyl)imidazole-4-carboxylate + L-aspartate + ATP = (2S)-2-[5-amino-1-(5-phospho-beta-D-ribosyl)imidazole-4-carboxamido]succinate + ADP + phosphate + 2 H(+). Its pathway is purine metabolism; IMP biosynthesis via de novo pathway; 5-amino-1-(5-phospho-D-ribosyl)imidazole-4-carboxamide from 5-amino-1-(5-phospho-D-ribosyl)imidazole-4-carboxylate: step 1/2. This is Phosphoribosylaminoimidazole-succinocarboxamide synthase from Shewanella sp. (strain MR-7).